The chain runs to 478 residues: Cytochrome c-552 (478 aa).

The signal sequence occupies residues 1 to 26 (MTRIKINARRIFSLLIPFFFFTSVHA). Histidine 94 lines the heme c pocket. The heme site is built by cysteine 122, cysteine 125, and lysine 126. Heme c contacts are provided by cysteine 160, cysteine 163, histidine 164, cysteine 209, cysteine 212, and histidine 213. Ca(2+) is bound by residues glutamate 215, tyrosine 216, lysine 261, and glutamine 263. Tyrosine 216 contacts substrate. A substrate-binding site is contributed by histidine 264. Histidine 275, cysteine 282, cysteine 285, histidine 286, histidine 301, cysteine 314, cysteine 317, histidine 318, and histidine 393 together coordinate heme c.

It belongs to the cytochrome c-552 family. It depends on Ca(2+) as a cofactor. The cofactor is heme c.

It is found in the periplasm. The catalysed reaction is 6 Fe(III)-[cytochrome c] + NH4(+) + 2 H2O = 6 Fe(II)-[cytochrome c] + nitrite + 8 H(+). Its pathway is nitrogen metabolism; nitrate reduction (assimilation). Functionally, catalyzes the reduction of nitrite to ammonia, consuming six electrons in the process. The sequence is that of Cytochrome c-552 from Shigella flexneri.